The primary structure comprises 81 residues: Mu/omega-theraphotoxin-Hs1a (81 aa).

The N-terminal stretch at 1 to 21 is a signal peptide; it reads MRASMFLALAGLVLLFVVCYA. The propeptide occupies 22-48; it reads SESEEKEFPRELLFKFFAVDDFKGEER. Disulfide bonds link cysteine 50–cysteine 65, cysteine 57–cysteine 70, and cysteine 64–cysteine 77.

The protein belongs to the neurotoxin 10 (Hwtx-1) family. 23 (HwTx-I) subfamily. Expressed by the venom gland.

It is found in the secreted. In terms of biological role, lethal toxin with multiple biological activities. Inhibits voltage-gated TTX-sensitive sodium channels in DRG neurons (IC(50)=55 nM) and also shows activity when directly tested on Nav1.7/SCN9A (IC(50)=25.1-630 nM). Inhibits N-type calcium channels (Cav2.2/CACNA1B (IC(50)=100 nM)). Also blocks neuromuscular transmission. In vivo, intrathecal injected toxin shows analgesic activity in the rat formalin-induced pain model, without induction of motor dysfunction in rats. This chain is Mu/omega-theraphotoxin-Hs1a, found in Cyriopagopus schmidti (Chinese bird spider).